Consider the following 576-residue polypeptide: Threonine dehydratase, mitochondrial (576 aa).

K109 carries the N6-(pyridoxal phosphate)lysine modification. ACT-like domains are found at residues V393–D473 and R495–D566.

It belongs to the serine/threonine dehydratase family. As to quaternary structure, homotetramer. Pyridoxal 5'-phosphate serves as cofactor.

Its subcellular location is the mitochondrion. The catalysed reaction is L-threonine = 2-oxobutanoate + NH4(+). It participates in amino-acid biosynthesis; L-isoleucine biosynthesis; 2-oxobutanoate from L-threonine: step 1/1. Its activity is regulated as follows. Isoleucine allosterically inhibits while valine allosterically activates this enzyme. This Saccharomyces cerevisiae (strain ATCC 204508 / S288c) (Baker's yeast) protein is Threonine dehydratase, mitochondrial (ILV1).